Here is a 220-residue protein sequence, read N- to C-terminus: MEFIVCNGCGCSPSKRQFFITACSHVFCETCRTTPTADFCHLCKIPTKTLKMDASLPKNVKKMFGDVGVMSTDIHKRLARVIGFQKIQKSIQLKMENKKSVMRKEQTKKVEKKTEEMHCQLSKLTSFEENNRKKLEDIERENEKLRNLISALELKVASSRDIDDDEFFMQGTPTSSNPSVAGSDVDNDELLDYDLLGLRNRSDSSSSNCSSQSNRGGSLF.

An RING-type zinc finger spans residues 6–44 (CNGCGCSPSKRQFFITACSHVFCETCRTTPTADFCHLCK). Residues 124-155 (LTSFEENNRKKLEDIERENEKLRNLISALELK) adopt a coiled-coil conformation. 2 disordered regions span residues 166 to 186 (EFFMQGTPTSSNPSVAGSDVD) and 201 to 220 (RSDSSSSNCSSQSNRGGSLF). The segment covering 171–180 (GTPTSSNPSV) has biased composition (polar residues).

As to quaternary structure, interacts with zhp-2; the interaction is required for their chromosome association and stability. As to expression, expressed in the germline.

It localises to the chromosome. Functionally, recruited co-dependently with zhp-2 to the synaptonemal complex between homologous chromosome pairs to regulate the formation and number of crossover events between homologs during meiotic recombination. Together with zhp-2, promotes the accumulation of pro-crossover proteins, including zhp-3 and zhp-4, at a designated crossover site along the recombination intermediate. Limits the number of crossover sites along a recombination intermediate by restricting the association of these pro-crossover proteins with other recombination sites during late prophase. Also, together with zhp-2, plays a role in chromosome remodeling following crossover formation to promote two successive rounds of chromosome segregation during meiosis. This Caenorhabditis elegans protein is Zip homologous protein 1.